Consider the following 195-residue polypeptide: HTH-type transcriptional regulator BetI (195 aa).

The 61-residue stretch at 8–68 folds into the HTH tetR-type domain; that stretch reads SIRRRQLIDA…ATMRDITSQL (61 aa). A DNA-binding region (H-T-H motif) is located at residues 31 to 50; that stretch reads TIAQIARRAGVSTGIISHYF.

It functions in the pathway amine and polyamine biosynthesis; betaine biosynthesis via choline pathway [regulation]. Its function is as follows. Repressor involved in the biosynthesis of the osmoprotectant glycine betaine. It represses transcription of the choline transporter BetT and the genes of BetAB involved in the synthesis of glycine betaine. The protein is HTH-type transcriptional regulator BetI of Escherichia coli (strain K12 / DH10B).